A 135-amino-acid chain; its full sequence is ATP synthase epsilon chain (135 aa).

It belongs to the ATPase epsilon chain family. In terms of assembly, F-type ATPases have 2 components, CF(1) - the catalytic core - and CF(0) - the membrane proton channel. CF(1) has five subunits: alpha(3), beta(3), gamma(1), delta(1), epsilon(1). CF(0) has three main subunits: a, b and c.

The protein localises to the cell inner membrane. Functionally, produces ATP from ADP in the presence of a proton gradient across the membrane. The protein is ATP synthase epsilon chain of Nitrobacter winogradskyi (strain ATCC 25391 / DSM 10237 / CIP 104748 / NCIMB 11846 / Nb-255).